Reading from the N-terminus, the 125-residue chain is UPF0251 protein Dhaf_1981 (125 aa).

This sequence belongs to the UPF0251 family.

The protein is UPF0251 protein Dhaf_1981 of Desulfitobacterium hafniense (strain DSM 10664 / DCB-2).